Reading from the N-terminus, the 288-residue chain is Syntaxin PEP12 (288 aa).

The Cytoplasmic portion of the chain corresponds to 1–268 (MSEDEFFGGD…RYQKRTSRWR (268 aa)). S2 and S23 each carry phosphoserine. One can recognise a t-SNARE coiled-coil homology domain in the interval 195-257 (QNLIEQRDQE…QLASDELRKA (63 aa)). Residues 269–288 (VYLLIVLLVMLLFIFLIMKL) form a helical; Anchor for type IV membrane protein membrane-spanning segment.

Belongs to the syntaxin family. Ubiquitinated.

It is found in the membrane. Its function is as follows. Plays a role in the sorting and targeting of vacuolar proteases. The polypeptide is Syntaxin PEP12 (PEP12) (Saccharomyces cerevisiae (strain ATCC 204508 / S288c) (Baker's yeast)).